The primary structure comprises 849 residues: MEAGETWNVSLEWPPPSLDLSTITQTPSTIVGSGIPLNYAGLSLIVIPLITLLGNLLVIISVLRYRALQSAINFLILGLAVADLLVAIIVMPYAVYVYVTNGDWYLGNLMCDIYMASDVCCSTASILLLAVISFDRYRAVSLPIQYSRQSQNVKRVWTLIAVIWLVSLTLASPMVFGVNVRPPDANPYECRFYNAEFSILSSMISFVIPCFLVLFVYIRIIIALKKREKAAKMRREKNTIAHGLTMRPDTGEEQVDEEAAGRIVAGPVVNVMMAALPSMTRRMRQFERHRRAIELAGDEEWEEDELDVMDECCGGDDAGDDDDDYHADNGQGVVEASAPRTTSMLRRIINAASVGTANSTAQSVASASGMPAFFAQNISTTSPSSSSCARTTTTTSAIPKASGDLPLPMLLNEREFGNSSTPRSSLESLSENVNVITNDFVSENCTTFSRRSSYADDSQPTSSQTSSGDGRSYSIKGQKRFRNLSRNYSTKHHRKVVKVNRGNSRNNSRTASITNQSDDALIPAIIRTISRKSPRLFRRDKTDIKKHSMILANPITEPPKEYRRVSMPIHPTNSQTETETISASRDIENLPTTTISRSTTANSAELLGSPDDFEKFPALITETVLEDVLAETREGCFMQPTVSFALTVREMEGNALNNLKGCSVESSRRVSQVDPPLAIQILTRPSLPHLDLQRMDSIGTTCSSKTRADSLRSVDSKGSKKSNRNGIAVKLVKRAIKHEHSLKRKVSKAQRKEKRATKTLGVVVGVFLVCWVPFFVINILNAVCILLNKDSCQVGYDLFFYCTWIGYMNSFMNPIIYTIFNTEFRRAFKSIIFGRNSTRHHFSNKQAHV.

Residues 1 to 39 are Extracellular-facing; it reads MEAGETWNVSLEWPPPSLDLSTITQTPSTIVGSGIPLNY. Asparagine 8 carries an N-linked (GlcNAc...) asparagine glycan. Residues 40–60 traverse the membrane as a helical segment; that stretch reads AGLSLIVIPLITLLGNLLVII. Residues 61–70 are Cytoplasmic-facing; that stretch reads SVLRYRALQS. A helical transmembrane segment spans residues 71-91; the sequence is AINFLILGLAVADLLVAIIVM. The Extracellular portion of the chain corresponds to 92–112; the sequence is PYAVYVYVTNGDWYLGNLMCD. Residues cysteine 111 and cysteine 190 are joined by a disulfide bond. The chain crosses the membrane as a helical span at residues 113–133; it reads IYMASDVCCSTASILLLAVIS. The Cytoplasmic portion of the chain corresponds to 134–155; sequence FDRYRAVSLPIQYSRQSQNVKR. A helical membrane pass occupies residues 156–176; sequence VWTLIAVIWLVSLTLASPMVF. The Extracellular portion of the chain corresponds to 177-203; sequence GVNVRPPDANPYECRFYNAEFSILSSM. Residues 183-849 are required for the interaction with gpa-14; it reads PDANPYECRF…HHFSNKQAHV (667 aa). A helical membrane pass occupies residues 204–224; that stretch reads ISFVIPCFLVLFVYIRIIIAL. At 225–759 the chain is on the cytoplasmic side; it reads KKREKAAKMR…QRKEKRATKT (535 aa). The tract at residues 450 to 515 is disordered; the sequence is RRSSYADDSQ…NNSRTASITN (66 aa). Residues 457-470 show a composition bias toward low complexity; that stretch reads DSQPTSSQTSSGDG. Basic residues predominate over residues 477–498; sequence GQKRFRNLSRNYSTKHHRKVVK. Over residues 501–515 the composition is skewed to polar residues; sequence RGNSRNNSRTASITN. Residues 760–780 form a helical membrane-spanning segment; it reads LGVVVGVFLVCWVPFFVINIL. Residues 781–798 are Extracellular-facing; it reads NAVCILLNKDSCQVGYDL. Residues 799–819 form a helical membrane-spanning segment; that stretch reads FFYCTWIGYMNSFMNPIIYTI. Topologically, residues 820–849 are cytoplasmic; it reads FNTEFRRAFKSIIFGRNSTRHHFSNKQAHV.

The protein belongs to the G-protein coupled receptor 1 family. As to quaternary structure, interacts (via C-terminus) with the G-alpha protein gpa-14; the interaction is direct. As to expression, expressed in all dopaminergic neurons. Expressed in neurons around the nerve ring and the posterior side of the body including PDE neurons. In hermaphrodites, expressed in the head and tail ganglia including in the RIA interneuron pair, and in a subset of sublateral interneurons and the PDA neuron in the tail. Expressed in cholinergic SIA neurons. Also expressed in the male tail. In males, expressed in the dorsal spicule protractor, ventral spicule protractor, dorsal spicule retractor and ventral spicule retractor muscles and the sensory post-cloacal sensilla B (PCB) neuron. In males, expressed in the sensory hook neurons HOA.

It is found in the cell membrane. G-protein coupled receptor which binds to the neurotransmitter dopamine with high affinity leading to the activation of an associated G-protein and downstream signaling pathways. Couples to G-proteins to inhibit adenylate cyclase (AC) activity and cAMP production. Inhibits synaptic vesicle fusion to negatively regulate the release of dopamine at dopaminergic neuron synapses. Antagonizes octopamine signaling in response to food by promoting the dopamine-mediated suppression of crh-1/CREB1 transcription factor activation in cholinergic SIA neurons. This is most likely in association with the G(o)-alpha G-protein subunit goa-1. In association with the G-alpha protein gpa-14, modulates two types of learning behavior: touch habituation and chemosensory associative conditioning. May act partly via tsp-17 to negatively regulate dopamine reuptake transporter dat-1 activity. Plays a role in behavioral plasticity and regulates the decision-making process when conflicting alternatives are present. Promotes male mating behavior by antagonizing acetylcholine signaling to control the protrusions of copulatory spicules from the tail of males during hermaphrodite vulval location. Modulates unc-7 activity at gap junctions to promote inhibitory neuronal signaling transduction between chemosensory and mechanosensory neurons, and thus ensures spicule insertion attempts are confined to the hermaphrodite vulva during copulation. Its function is as follows. G-protein coupled receptor which binds to the neurotransmitter dopamine with high affinity leading to the activation of an associated G-protein and downstream signaling pathways. Couples to G-proteins to inhibit adenylate cyclase (AC) activity and cAMP production. The protein is Dopamine receptor 2 of Caenorhabditis elegans.